Reading from the N-terminus, the 310-residue chain is Olfactory receptor 7A42 (310 aa).

Residues 1 to 25 (MESGNSTRRIPSFFLLGFSENPHLQ) are Extracellular-facing. Asn-5 carries N-linked (GlcNAc...) asparagine glycosylation. The helical transmembrane segment at 26–46 (FLIFVLFLSMYLVTVLGNLLI) threads the bilayer. At 47–67 (IMVIITQSPLHTPMYFFLANL) the chain is on the cytoplasmic side. A helical transmembrane segment spans residues 68–88 (SFVDICFTSTTVPKMLVNIQT). Over 89-100 (QSKAITYADCIS) the chain is Extracellular. Residues Cys-98 and Cys-190 are joined by a disulfide bond. Residues 101–121 (QMSVFLVFAELDNFLLAVMAY) traverse the membrane as a helical segment. The Cytoplasmic portion of the chain corresponds to 122 to 135 (DRYVAICHPLYYTF). The chain crosses the membrane as a helical span at residues 136-156 (IVNQHLCILMVLLSWVVSILH). Topologically, residues 157-202 (AFLQSSIVLQLTFCGDVKIPHFFCELNQLSQLTCLDSLSSHLIMNL) are extracellular. The chain crosses the membrane as a helical span at residues 203–223 (VPVLLAVISFSSILYSYFKIV). At 224 to 240 (SSICSISSVQGKYTAFS) the chain is on the cytoplasmic side. Residues 241-261 (TCVSHLSIVFLFYSTGLGVYV) form a helical membrane-spanning segment. Over 262 to 272 (SSAVVQSSHSA) the chain is Extracellular. A helical membrane pass occupies residues 273 to 293 (ARASVMYTVVTPMLNPFIYSL). Over 294–310 (RNKDVKKALERLLEGKL) the chain is Cytoplasmic.

It belongs to the G-protein coupled receptor 1 family.

Its subcellular location is the cell membrane. Its function is as follows. Odorant receptor. The sequence is that of Olfactory receptor 7A42 from Mus musculus (Mouse).